A 34-amino-acid chain; its full sequence is Photosystem II reaction center protein Psb30 (34 aa).

Residues Val-6–Leu-26 traverse the membrane as a helical segment.

It belongs to the Psb30/Ycf12 family. PSII is composed of 1 copy each of membrane proteins PsbA, PsbB, PsbC, PsbD, PsbE, PsbF, PsbH, PsbI, PsbJ, PsbK, PsbL, PsbM, PsbT, PsbX, PsbY, PsbZ, Psb30/Ycf12, peripheral proteins of the oxygen-evolving complex and a large number of cofactors. It forms dimeric complexes.

It localises to the plastid. The protein resides in the chloroplast thylakoid membrane. Its function is as follows. A core subunit of photosystem II (PSII), probably helps stabilize the reaction center. The protein is Photosystem II reaction center protein Psb30 of Pyropia yezoensis (Susabi-nori).